The primary structure comprises 406 residues: Cysteine desulfurase (406 aa).

The residue at position 226 (K226) is an N6-(pyridoxal phosphate)lysine. C364 (cysteine persulfide intermediate) is an active-site residue.

The protein belongs to the class-V pyridoxal-phosphate-dependent aminotransferase family. Csd subfamily. In terms of assembly, homodimer. Interacts with SufE and the SufBCD complex composed of SufB, SufC and SufD. The interaction with SufE is required to mediate the direct transfer of the sulfur atom from the S-sulfanylcysteine. Pyridoxal 5'-phosphate serves as cofactor.

It localises to the cytoplasm. It catalyses the reaction (sulfur carrier)-H + L-cysteine = (sulfur carrier)-SH + L-alanine. The catalysed reaction is L-selenocysteine + AH2 = hydrogenselenide + L-alanine + A + H(+). Its pathway is cofactor biosynthesis; iron-sulfur cluster biosynthesis. Cysteine desulfurases mobilize the sulfur from L-cysteine to yield L-alanine, an essential step in sulfur metabolism for biosynthesis of a variety of sulfur-containing biomolecules. Component of the suf operon, which is activated and required under specific conditions such as oxidative stress and iron limitation. Acts as a potent selenocysteine lyase in vitro, that mobilizes selenium from L-selenocysteine. Selenocysteine lyase activity is however unsure in vivo. This Escherichia coli O6:K15:H31 (strain 536 / UPEC) protein is Cysteine desulfurase.